The chain runs to 161 residues: MGRAWKFGDDIDTDVIIQGKYLVINEPEELAKHVFENLRPEFAKEVKKGDFVVAGENFGCGSSREHAPLALKATGIEAVIAKSYARIFFRNAINIGLRVLECKETDKIEDGDELEVDYEKGVIYNKTKGEEYPINPLPDFLKEILEKGGLVEFAKSLRERA.

Belongs to the LeuD family. LeuD type 2 subfamily. In terms of assembly, heterodimer of LeuC and LeuD.

The catalysed reaction is (2R,3S)-3-isopropylmalate = (2S)-2-isopropylmalate. The protein operates within amino-acid biosynthesis; L-leucine biosynthesis; L-leucine from 3-methyl-2-oxobutanoate: step 2/4. Catalyzes the isomerization between 2-isopropylmalate and 3-isopropylmalate, via the formation of 2-isopropylmaleate. This is 3-isopropylmalate dehydratase small subunit 1 (leuD1) from Archaeoglobus fulgidus (strain ATCC 49558 / DSM 4304 / JCM 9628 / NBRC 100126 / VC-16).